The following is a 132-amino-acid chain: Large ribosomal subunit protein bL17 (132 aa).

It belongs to the bacterial ribosomal protein bL17 family. As to quaternary structure, part of the 50S ribosomal subunit. Contacts protein L32.

This is Large ribosomal subunit protein bL17 from Ralstonia pickettii (strain 12J).